The sequence spans 355 residues: Vacuolar protein sorting-associated protein 37C (355 aa).

Position 29 is a phosphoserine (S29). A VPS37 C-terminal domain is found at 78–167 (VERCQEQKAK…RKPRASQELA (90 aa)). The interval 159–355 (KPRASQELAG…PPPGPAWPGY (197 aa)) is disordered. Composition is skewed to pro residues over residues 170-186 (APPPRPPPPVRPVPQGT) and 194-205 (PQPPSAMPPYPL). Over residues 246-257 (PAAQPGPRGAAG) the composition is skewed to low complexity. The segment covering 321-355 (PGQPQPSVPLQPPYPPGPAPPYGFPPPPGPAWPGY) has biased composition (pro residues).

It belongs to the VPS37 family. In terms of assembly, component of the ESCRT-I complex (endosomal sorting complex required for transport I) which consists of TSG101, VPS28, a VPS37 protein (VPS37A to -D) and MVB12A or MVB12B in a 1:1:1:1 stoichiometry. Interacts with TSG101, VPS28, MVB12A and MVB12B. Component of the ESCRT-I complex (endosomal sorting complex required for transport I) which consists of TSG101, VPS28, a VPS37 protein (VPS37A to -D) and UBAP1 in a 1:1:1:1 stoichiometry. Interacts with HGS and STAM2. Interacts with CEP55. Phosphorylated by TBK1.

The protein localises to the late endosome membrane. Its function is as follows. Component of the ESCRT-I complex, a regulator of vesicular trafficking process. Required for the sorting of endocytic ubiquitinated cargos into multivesicular bodies. May be involved in cell growth and differentiation. The protein is Vacuolar protein sorting-associated protein 37C (VPS37C) of Pongo abelii (Sumatran orangutan).